A 130-amino-acid polypeptide reads, in one-letter code: Methylglyoxal synthase (130 aa).

Positions 1-130 constitute an MGS-like domain; the sequence is MSKPRIALIA…DLARNMQDVC (130 aa). Substrate is bound by residues H11, K15, 37–40, and 57–58; these read TGTT and SG. D63 acts as the Proton donor/acceptor in catalysis. H90 serves as a coordination point for substrate.

The protein belongs to the methylglyoxal synthase family.

It carries out the reaction dihydroxyacetone phosphate = methylglyoxal + phosphate. Functionally, catalyzes the formation of methylglyoxal from dihydroxyacetone phosphate. The sequence is that of Methylglyoxal synthase from Burkholderia cenocepacia (strain HI2424).